Consider the following 227-residue polypeptide: MSDINLDWVDRRQLQRLEEMLIVVDENDKVIGADTKRNCHLNENIEKGLLHRAFSVVLFNTKNRILIQQRSDTKVTFPGYFTDSCSSHPLYNPAELEEKDAIGVRRAAQRRLQAELGIPGEQISPEDIVFMTIYHHKAKSDRIWGEHEICYLLLVRKNVTLNPDPSETKSILYLSQEELWELLEREARGEVKVTPWLRTIAERFLYRWWPHLDDVTPFVELHKIHRV.

Lysine 36 serves as a coordination point for substrate. Histidine 40 and histidine 51 together coordinate Mg(2+). The region spanning 49-199 (LLHRAFSVVL…EVKVTPWLRT (151 aa)) is the Nudix hydrolase domain. Residues arginine 70 and lysine 74 each coordinate substrate. The active site involves serine 86. Residue serine 87 coordinates substrate. Glutamate 146 and glutamate 148 together coordinate Mg(2+). Residue glutamate 148 is part of the active site. A Microbody targeting signal motif is present at residues 225–227 (HRV).

This sequence belongs to the IPP isomerase type 1 family. The cofactor is Mg(2+). As to expression, muscle-specific expression.

The protein localises to the peroxisome. The enzyme catalyses isopentenyl diphosphate = dimethylallyl diphosphate. The protein operates within isoprenoid biosynthesis; dimethylallyl diphosphate biosynthesis; dimethylallyl diphosphate from isopentenyl diphosphate: step 1/1. Its function is as follows. Catalyzes the 1,3-allylic rearrangement of the homoallylic substrate isopentenyl (IPP) to its highly electrophilic allylic isomer, dimethylallyl diphosphate (DMAPP). The polypeptide is Isopentenyl-diphosphate delta-isomerase 2 (IDI2) (Homo sapiens (Human)).